The following is a 228-amino-acid chain: Small ribosomal subunit protein uS10m (228 aa).

Residues 1 to 17 constitute a mitochondrion transit peptide; the sequence is MKRYMFGTLPRVQPKRC.

It belongs to the universal ribosomal protein uS10 family. As to quaternary structure, component of the mitochondrial small ribosomal subunit (mt-SSU). Mature yeast 74S mitochondrial ribosomes consist of a small (37S) and a large (54S) subunit. The 37S small subunit contains a 15S ribosomal RNA (15S mt-rRNA) and at least 32 different proteins. The 54S large subunit contains a 21S rRNA (21S mt-rRNA) and at least 45 different proteins.

The protein resides in the mitochondrion. Its function is as follows. Component of the mitochondrial ribosome (mitoribosome), a dedicated translation machinery responsible for the synthesis of mitochondrial genome-encoded proteins, including at least some of the essential transmembrane subunits of the mitochondrial respiratory chain. The mitoribosomes are attached to the mitochondrial inner membrane and translation products are cotranslationally integrated into the membrane. In Schizosaccharomyces pombe (strain 972 / ATCC 24843) (Fission yeast), this protein is Small ribosomal subunit protein uS10m (rsm10).